The sequence spans 226 residues: MIPNSFPDQAEMARLTAGMLLEIEAVHFNAREPFILASGLPSPTYIDCRKLISFPRIRSTLMDFLTVTVMREAGFEAFDNIAGGETAGIPFGALVAERLALPMTYVRKKPKGYGRDAQIEGVMREGERVLLVEDLTTDGGSKLKFVEAIRKTGATCGHTAVIFSYGIFPETESSLAAEGVKLHHLCTWWDVLAEARARGSFDPETLGAVETFLNDPRAWQEAHKRD.

5-phospho-alpha-D-ribose 1-diphosphate contacts are provided by residues R107, K108, K111, and 133–141 (EDLTTDGGS). T137 serves as a coordination point for orotate.

It belongs to the purine/pyrimidine phosphoribosyltransferase family. PyrE subfamily. As to quaternary structure, homodimer. It depends on Mg(2+) as a cofactor.

It carries out the reaction orotidine 5'-phosphate + diphosphate = orotate + 5-phospho-alpha-D-ribose 1-diphosphate. It functions in the pathway pyrimidine metabolism; UMP biosynthesis via de novo pathway; UMP from orotate: step 1/2. Its function is as follows. Catalyzes the transfer of a ribosyl phosphate group from 5-phosphoribose 1-diphosphate to orotate, leading to the formation of orotidine monophosphate (OMP). The chain is Orotate phosphoribosyltransferase from Dinoroseobacter shibae (strain DSM 16493 / NCIMB 14021 / DFL 12).